The primary structure comprises 440 residues: Protein dumpy-20 (440 aa).

Residues 96–119 (ILSDPSLHGSNSSSSTSDVGSSVD) are disordered. A compositionally biased stretch (low complexity) spans 98-119 (SDPSLHGSNSSSSTSDVGSSVD). BED-type zinc fingers lie at residues 137–186 (PTEN…YQKV) and 350–399 (KTEH…YNDV). Cys156, Cys159, His174, His179, Cys369, Cys372, His387, and His392 together coordinate Zn(2+).

Functionally, may be directly or indirectly involved in cuticle function. This Caenorhabditis elegans protein is Protein dumpy-20 (dpy-20).